The following is a 583-amino-acid chain: Bifunctional lycopene cyclase/phytoene synthase (583 aa).

A lycopene beta-cyclase region spans residues 1–243 (MGFDYALVHL…IVFGQLAFDN (243 aa)). Transmembrane regions (helical) follow at residues 3–23 (FDYA…LTWL), 35–55 (KVGY…SYLI), 75–97 (IPLE…YLLL), 120–140 (YMRL…WRCI), 151–171 (LILV…YQFI), 173–193 (ALPV…LWVV), and 221–241 (IEEA…QLAF). The phytoene synthase stretch occupies residues 250 to 583 (TFPHLFTGPS…MVAWRTLNSK (334 aa)).

This sequence in the N-terminal section; belongs to the lycopene beta-cyclase family. The protein in the C-terminal section; belongs to the phytoene/squalene synthase family.

Its subcellular location is the membrane. The enzyme catalyses all-trans-lycopene = gamma-carotene. The catalysed reaction is gamma-carotene = all-trans-beta-carotene. It catalyses the reaction 2 (2E,6E,10E)-geranylgeranyl diphosphate = 15-cis-phytoene + 2 diphosphate. It functions in the pathway carotenoid biosynthesis; beta-carotene biosynthesis. The protein operates within carotenoid biosynthesis; phytoene biosynthesis; all-trans-phytoene from geranylgeranyl diphosphate: step 1/1. Functionally, bifunctional enzyme that catalyzes the reactions from geranylgeranyl diphosphate to phytoene (phytoene synthase) and lycopene to beta-carotene via the intermediate gamma-carotene (lycopene cyclase). The chain is Bifunctional lycopene cyclase/phytoene synthase from Pyrenophora tritici-repentis (strain Pt-1C-BFP) (Wheat tan spot fungus).